We begin with the raw amino-acid sequence, 441 residues long: tRNA-2-methylthio-N(6)-dimethylallyladenosine synthase (441 aa).

The region spanning 5–121 (KKLYLETFGC…LQGMVAAAEE (117 aa)) is the MTTase N-terminal domain. Residues cysteine 14, cysteine 50, cysteine 84, cysteine 159, cysteine 163, and cysteine 166 each coordinate [4Fe-4S] cluster. In terms of domain architecture, Radical SAM core spans 145 to 375 (AEGGVTRFVT…QAAQKKTTLA (231 aa)). Residues 378–440 (RSLEGTVQKV…QTLLKGEIVH (63 aa)) enclose the TRAM domain.

Belongs to the methylthiotransferase family. MiaB subfamily. As to quaternary structure, monomer. [4Fe-4S] cluster is required as a cofactor.

The protein localises to the cytoplasm. The catalysed reaction is N(6)-dimethylallyladenosine(37) in tRNA + (sulfur carrier)-SH + AH2 + 2 S-adenosyl-L-methionine = 2-methylsulfanyl-N(6)-dimethylallyladenosine(37) in tRNA + (sulfur carrier)-H + 5'-deoxyadenosine + L-methionine + A + S-adenosyl-L-homocysteine + 2 H(+). Functionally, catalyzes the methylthiolation of N6-(dimethylallyl)adenosine (i(6)A), leading to the formation of 2-methylthio-N6-(dimethylallyl)adenosine (ms(2)i(6)A) at position 37 in tRNAs that read codons beginning with uridine. The polypeptide is tRNA-2-methylthio-N(6)-dimethylallyladenosine synthase (Citrifermentans bemidjiense (strain ATCC BAA-1014 / DSM 16622 / JCM 12645 / Bem) (Geobacter bemidjiensis)).